The chain runs to 196 residues: Putative HTH-type transcriptional regulator in exeN 3'region (196 aa).

An HTH luxR-type domain is found at Ala-120–Leu-185. Residues Thr-144 to Lys-163 constitute a DNA-binding region (H-T-H motif).

The polypeptide is Putative HTH-type transcriptional regulator in exeN 3'region (Aeromonas salmonicida).